A 122-amino-acid polypeptide reads, in one-letter code: Ribosome-binding factor A (122 aa).

This sequence belongs to the RbfA family. As to quaternary structure, monomer. Binds 30S ribosomal subunits, but not 50S ribosomal subunits or 70S ribosomes.

The protein resides in the cytoplasm. Its function is as follows. One of several proteins that assist in the late maturation steps of the functional core of the 30S ribosomal subunit. Associates with free 30S ribosomal subunits (but not with 30S subunits that are part of 70S ribosomes or polysomes). Required for efficient processing of 16S rRNA. May interact with the 5'-terminal helix region of 16S rRNA. In Geotalea uraniireducens (strain Rf4) (Geobacter uraniireducens), this protein is Ribosome-binding factor A.